The sequence spans 1103 residues: Isoleucine--tRNA ligase (1103 aa).

The interval 1–25 is disordered; it reads MSENVYPKANEGGETAHVAPNPSFP. The 'HIGH' region motif lies at 65-75; the sequence is PFANGLPHYGH. Positions 649–653 match the 'KMSKS' region motif; it reads KMSKH. Lys652 is a binding site for ATP.

The protein belongs to the class-I aminoacyl-tRNA synthetase family. IleS type 2 subfamily. In terms of assembly, monomer. It depends on Zn(2+) as a cofactor.

It localises to the cytoplasm. The catalysed reaction is tRNA(Ile) + L-isoleucine + ATP = L-isoleucyl-tRNA(Ile) + AMP + diphosphate. Its function is as follows. Catalyzes the attachment of isoleucine to tRNA(Ile). As IleRS can inadvertently accommodate and process structurally similar amino acids such as valine, to avoid such errors it has two additional distinct tRNA(Ile)-dependent editing activities. One activity is designated as 'pretransfer' editing and involves the hydrolysis of activated Val-AMP. The other activity is designated 'posttransfer' editing and involves deacylation of mischarged Val-tRNA(Ile). This is Isoleucine--tRNA ligase from Bifidobacterium longum (strain NCC 2705).